Consider the following 229-residue polypeptide: Endonuclease V (229 aa).

Positions 36 and 104 each coordinate Mg(2+).

It belongs to the endonuclease V family. Requires Mg(2+) as cofactor.

Its subcellular location is the cytoplasm. It carries out the reaction Endonucleolytic cleavage at apurinic or apyrimidinic sites to products with a 5'-phosphate.. In terms of biological role, DNA repair enzyme involved in the repair of deaminated bases. Selectively cleaves double-stranded DNA at the second phosphodiester bond 3' to a deoxyinosine leaving behind the intact lesion on the nicked DNA. This Pectobacterium carotovorum subsp. carotovorum (strain PC1) protein is Endonuclease V.